The chain runs to 265 residues: MAGHTTADYISHHLTFLTTGQGFWNVHLDTLFFSLVSGVLFLFFFYRTASKATSGVPGKFQCLVEMLVEWVDGVVKDNIHGSDVRHQIGSLALTIFCWVFVMNAIDLIPVDFPPQFAELLGIHYLRAVPTADISATLGMSVCVFALIIFYTIKSKGLGGFVKEYTLHPFNHWAFIPVNFLLEAVTLLAKPISLAFRLFGNMYAGELIFVLIAVMYMADNIIPQVLGIPLHLIWAIFHILVITLQAFIFMMLTVVYLSIAYNKSDH.

6 helical membrane passes run 26–46 (VHLD…FFFY), 88–108 (IGSL…IDLI), 132–152 (DISA…FYTI), 168–188 (PFNH…TLLA), 195–217 (FRLF…MYMA), and 231–251 (LIWA…FMML).

The protein belongs to the ATPase A chain family. In terms of assembly, F-type ATPases have 2 components, CF(1) - the catalytic core - and CF(0) - the membrane proton channel. CF(1) has five subunits: alpha(3), beta(3), gamma(1), delta(1), epsilon(1). CF(0) has three main subunits: a(1), b(2) and c(9-12). The alpha and beta chains form an alternating ring which encloses part of the gamma chain. CF(1) is attached to CF(0) by a central stalk formed by the gamma and epsilon chains, while a peripheral stalk is formed by the delta and b chains.

Its subcellular location is the cell inner membrane. Its function is as follows. Key component of the proton channel; it plays a direct role in the translocation of protons across the membrane. This chain is ATP synthase subunit a, found in Histophilus somni (strain 129Pt) (Haemophilus somnus).